A 122-amino-acid polypeptide reads, in one-letter code: Large ribosomal subunit protein uL14 (122 aa).

Belongs to the universal ribosomal protein uL14 family. In terms of assembly, part of the 50S ribosomal subunit. Forms a cluster with proteins L3 and L19. In the 70S ribosome, L14 and L19 interact and together make contacts with the 16S rRNA in bridges B5 and B8.

In terms of biological role, binds to 23S rRNA. Forms part of two intersubunit bridges in the 70S ribosome. The polypeptide is Large ribosomal subunit protein uL14 (Bacillus mycoides (strain KBAB4) (Bacillus weihenstephanensis)).